Reading from the N-terminus, the 483-residue chain is Cysteine proteinase 1, mitochondrial (483 aa).

Residues 1–30 (MLPTSVSRSLYLKTFRSHLLRAPQIVLKRM) constitute a mitochondrion transit peptide. Catalysis depends on residues cysteine 102, histidine 398, and asparagine 421. Residue lysine 483 is a propeptide, removed in mature form; by autocatalysis.

The protein belongs to the peptidase C1 family. Homohexamer. Binds to nucleic acids. Binds single-stranded DNA and RNA with higher affinity than double-stranded DNA. The N-terminus of isoform Cytoplasmic is blocked.

It localises to the mitochondrion. Its subcellular location is the cytoplasm. It catalyses the reaction Inactivates bleomycin B2 (a cytotoxic glycometallopeptide) by hydrolysis of a carboxyamide bond of beta-aminoalanine, but also shows general aminopeptidase activity. The specificity varies somewhat with source, but amino acid arylamides of Met, Leu and Ala are preferred.. Inhibited by E64, a specific inhibitor of cysteine proteases, N-ethylmaleimide, iodacetamide, and mercury and zinc ions. Functionally, the normal physiological role of the enzyme is unknown, but it is not essential for the viability of yeast cells. Has aminopeptidase activity, shortening substrate peptides sequentially by 1 amino acid. Has bleomycin hydrolase activity, which can protect the cell from the toxic effects of bleomycin. Has homocysteine-thiolactonase activity, protecting the cell against homocysteine toxicity. Acts as a repressor in the GAL4 regulatory system, but this does not require either the peptidase or nucleic acid-binding activities. The sequence is that of Cysteine proteinase 1, mitochondrial (LAP3) from Saccharomyces cerevisiae (strain AWRI1631) (Baker's yeast).